Here is a 140-residue protein sequence, read N- to C-terminus: MYNIDKILEIIPHRYPFLLVDRIIEVEEGKRAKGIKNVTINEPFFQGHFPSNPVMPGVLIVEAMAQVGAVAMLLKEEFKGKTPFFAGIDKVRFKKVVKPGDVLVIETELISLKGSIGKAKAVAMVDGEVVCEGELLFAIK.

His48 is a catalytic residue.

The protein belongs to the thioester dehydratase family. FabZ subfamily.

Its subcellular location is the cytoplasm. It catalyses the reaction a (3R)-hydroxyacyl-[ACP] = a (2E)-enoyl-[ACP] + H2O. In terms of biological role, involved in unsaturated fatty acids biosynthesis. Catalyzes the dehydration of short chain beta-hydroxyacyl-ACPs and long chain saturated and unsaturated beta-hydroxyacyl-ACPs. The chain is 3-hydroxyacyl-[acyl-carrier-protein] dehydratase FabZ from Caldicellulosiruptor bescii (strain ATCC BAA-1888 / DSM 6725 / KCTC 15123 / Z-1320) (Anaerocellum thermophilum).